The primary structure comprises 797 residues: Homoaconitase, mitochondrial (797 aa).

The N-terminal 47 residues, 1–47, are a transit peptide targeting the mitochondrion; the sequence is MVARFVPSAMTVLVARRGLAMASTRRGWRGLAVNLKPAAGRQWRQAY. [4Fe-4S] cluster contacts are provided by Cys-404, Cys-471, and Cys-474.

It belongs to the aconitase/IPM isomerase family. It depends on [4Fe-4S] cluster as a cofactor.

The protein resides in the mitochondrion. It catalyses the reaction (2R,3S)-homoisocitrate = cis-homoaconitate + H2O. It functions in the pathway amino-acid biosynthesis; L-lysine biosynthesis via AAA pathway; L-alpha-aminoadipate from 2-oxoglutarate: step 3/5. Functionally, catalyzes the reversible hydration of cis-homoaconitate to (2R,3S)-homoisocitrate, a step in the alpha-aminoadipate pathway for lysine biosynthesis. This chain is Homoaconitase, mitochondrial (LYS4), found in Chaetomium globosum (strain ATCC 6205 / CBS 148.51 / DSM 1962 / NBRC 6347 / NRRL 1970) (Soil fungus).